The primary structure comprises 390 residues: S-adenosylmethionine synthase (390 aa).

His-17 provides a ligand contact to ATP. Residue Asp-19 participates in Mg(2+) binding. Residue Glu-45 coordinates K(+). Positions 58 and 101 each coordinate L-methionine. The tract at residues Gln-101–Thr-111 is flexible loop. Residues Asp-160–Lys-162, Arg-226–Phe-227, Asp-235, Arg-241–Lys-242, Ala-258, and Lys-262 contribute to the ATP site. L-methionine is bound at residue Asp-235. An L-methionine-binding site is contributed by Lys-266.

The protein belongs to the AdoMet synthase family. Homotetramer; dimer of dimers. Mg(2+) serves as cofactor. K(+) is required as a cofactor.

The protein resides in the cytoplasm. The catalysed reaction is L-methionine + ATP + H2O = S-adenosyl-L-methionine + phosphate + diphosphate. It participates in amino-acid biosynthesis; S-adenosyl-L-methionine biosynthesis; S-adenosyl-L-methionine from L-methionine: step 1/1. Its function is as follows. Catalyzes the formation of S-adenosylmethionine (AdoMet) from methionine and ATP. The overall synthetic reaction is composed of two sequential steps, AdoMet formation and the subsequent tripolyphosphate hydrolysis which occurs prior to release of AdoMet from the enzyme. The polypeptide is S-adenosylmethionine synthase (Anaeromyxobacter dehalogenans (strain 2CP-1 / ATCC BAA-258)).